Here is a 192-residue protein sequence, read N- to C-terminus: Xanthine phosphoribosyltransferase (192 aa).

2 residues coordinate xanthine: Leu-20 and Asn-27. Position 128-132 (128-132) interacts with 5-phospho-alpha-D-ribose 1-diphosphate; sequence ANGQA. Lys-156 contacts xanthine.

This sequence belongs to the purine/pyrimidine phosphoribosyltransferase family. Xpt subfamily. Homodimer.

It localises to the cytoplasm. It catalyses the reaction XMP + diphosphate = xanthine + 5-phospho-alpha-D-ribose 1-diphosphate. Its pathway is purine metabolism; XMP biosynthesis via salvage pathway; XMP from xanthine: step 1/1. Functionally, converts the preformed base xanthine, a product of nucleic acid breakdown, to xanthosine 5'-monophosphate (XMP), so it can be reused for RNA or DNA synthesis. The sequence is that of Xanthine phosphoribosyltransferase from Listeria innocua serovar 6a (strain ATCC BAA-680 / CLIP 11262).